The primary structure comprises 78 residues: uncharacterized protein (78 aa).

The tract at residues 49-78 is disordered; the sequence is QRASLERSNSIRNLQSQGKRRSDSKESRKL. A compositionally biased stretch (polar residues) spans 54-65; it reads ERSNSIRNLQSQ. Residues 68–78 show a composition bias toward basic and acidic residues; the sequence is RRSDSKESRKL.

This is an uncharacterized protein from Saccharomyces cerevisiae (strain ATCC 204508 / S288c) (Baker's yeast).